The sequence spans 262 residues: Abhydrolase domain-containing protein AFT2-1 (262 aa).

A Peroxisomal targeting signal type 1 motif is present at residues Ser-260–Leu-262.

Belongs to the AB hydrolase superfamily. AKT2 hydrolase family.

The protein resides in the peroxisome. The protein operates within mycotoxin biosynthesis. Functionally, abhydrolase domain-containing protein; part of the gene clusters that mediate the biosynthesis of the host-selective toxins (HSTs) AF-toxins responsible for Alternaria black spot of strawberry disease by the strawberry pathotype. AF-toxin I and III are valine derivatives of 2,3-dyhydroxy-isovaleric acid and 2-hydroxy-isovaleric acid respectively, while AF II is an isoleucine derivative of 2-hydroxy-valeric acid. These derivatives are bound to a 9,10-epoxy-8-hydroxy-9-methyl-decatrienoic acid (EDA) moiety. On cellular level, AF-toxins affect plasma membrane of susceptible cells and cause a sudden increase in loss of K(+) after a few minutes of toxin treatment. The aldo-keto reductase AFTS1 catalyzes the conversion of 2-keto-isovaleric acid (2-KIV) to 2-hydroxy-isovaleric acid (2-HIV) by reduction of its ketone to an alcohol. The acyl-CoA ligase AFT1, the hydrolase AFT2 and the enoyl-CoA hydratases AFT3 and AFT6, but also the polyketide synthase AFT9, the acyl-CoA dehydrogenase AFT10, the cytochrome P450 monooxygenase AFT11 and the oxidoreductase AFT12 are all involved in the biosynthesis of the AK-, AF- and ACT-toxin common EDA structural moiety. The exact function of each enzyme, and of additional enzymes identified within the AF-toxin clusters have still to be determined. The polypeptide is Abhydrolase domain-containing protein AFT2-1 (Alternaria alternata (Alternaria rot fungus)).